We begin with the raw amino-acid sequence, 157 residues long: Transcription elongation factor GreB (157 aa).

Positions Lys-52–Arg-73 form a coiled coil.

Belongs to the GreA/GreB family. GreB subfamily.

Its function is as follows. Necessary for efficient RNA polymerase transcription elongation past template-encoded arresting sites. The arresting sites in DNA have the property of trapping a certain fraction of elongating RNA polymerases that pass through, resulting in locked ternary complexes. Cleavage of the nascent transcript by cleavage factors such as GreA or GreB allows the resumption of elongation from the new 3'terminus. GreB releases sequences of up to 9 nucleotides in length. The protein is Transcription elongation factor GreB of Pseudomonas syringae pv. tomato (strain ATCC BAA-871 / DC3000).